Reading from the N-terminus, the 499-residue chain is Lysine--tRNA ligase (499 aa).

Mg(2+)-binding residues include Glu-408 and Glu-415.

The protein belongs to the class-II aminoacyl-tRNA synthetase family. In terms of assembly, homodimer. It depends on Mg(2+) as a cofactor.

It localises to the cytoplasm. It carries out the reaction tRNA(Lys) + L-lysine + ATP = L-lysyl-tRNA(Lys) + AMP + diphosphate. This chain is Lysine--tRNA ligase, found in Bacillus cereus (strain ATCC 10987 / NRS 248).